A 112-amino-acid chain; its full sequence is UPF0342 protein SSU05_1260 (112 aa).

The protein belongs to the UPF0342 family.

This is UPF0342 protein SSU05_1260 from Streptococcus suis (strain 05ZYH33).